We begin with the raw amino-acid sequence, 831 residues long: Multiphosphoryl transfer protein (831 aa).

The HPr domain occupies 1–90 (MLTIQFLCPL…EYIQVRFIDS (90 aa)). The active-site Pros-phosphohistidine intermediate; for HPr activity is the His15. His15 carries the phosphohistidine; by EI modification. Residues 119–650 (GNVLASGVGV…AVKSQLRQLD (532 aa)) form a PTS EI region. Residue His298 is the Tele-phosphohistidine intermediate; for PTS EI activity of the active site. His298 is subject to Phosphohistidine; by autocatalysis. Residues Arg405 and Arg441 each coordinate phosphoenolpyruvate. Mg(2+) is bound by residues Glu540 and Asp564. Phosphoenolpyruvate-binding positions include 563 to 564 (ND) and Arg574. Cys611 acts as the Proton donor; for EI activity in catalysis. The PTS EIIA type-2 domain maps to 685–828 (PLLALENIFV…QSILTLLETE (144 aa)). His747 functions as the Tele-phosphohistidine intermediate; for PTS EIIA activity in the catalytic mechanism. At His747 the chain carries Phosphohistidine; by HPr.

This sequence belongs to the PEP-utilizing enzyme family. Requires Mg(2+) as cofactor.

The protein localises to the cytoplasm. The enzyme catalyses L-histidyl-[protein] + phosphoenolpyruvate = N(pros)-phospho-L-histidyl-[protein] + pyruvate. The catalysed reaction is D-fructose(out) + N(pros)-phospho-L-histidyl-[protein] = D-fructose 1-phosphate(in) + L-histidyl-[protein]. Functionally, multifunctional protein that includes general (non sugar-specific) and sugar-specific components of the phosphoenolpyruvate-dependent sugar phosphotransferase system (sugar PTS). This major carbohydrate active transport system catalyzes the phosphorylation of incoming sugar substrates concomitantly with their translocation across the cell membrane. The enzyme II FryABC PTS system is involved in fructose transport. This chain is Multiphosphoryl transfer protein (fryA), found in Escherichia coli O157:H7.